Consider the following 91-residue polypeptide: Putative membrane protein insertion efficiency factor (91 aa).

The disordered stretch occupies residues 72–91 (SGGNDPVPEKLTHINHQHEK). Residues 78 to 91 (VPEKLTHINHQHEK) show a composition bias toward basic and acidic residues.

This sequence belongs to the UPF0161 family.

It localises to the cell inner membrane. In terms of biological role, could be involved in insertion of integral membrane proteins into the membrane. This Pseudoalteromonas translucida (strain TAC 125) protein is Putative membrane protein insertion efficiency factor.